The chain runs to 90 residues: Small ribosomal subunit protein bS16 (90 aa).

It belongs to the bacterial ribosomal protein bS16 family.

The polypeptide is Small ribosomal subunit protein bS16 (Geobacillus kaustophilus (strain HTA426)).